The primary structure comprises 289 residues: RNA exonuclease 4 (289 aa).

Residues methionine 1–lysine 24 show a composition bias toward polar residues. A disordered region spans residues methionine 1–lysine 34. The segment covering glutamine 25–lysine 34 has biased composition (basic residues). Positions tyrosine 121–tyrosine 273 constitute an Exonuclease domain.

This sequence belongs to the REXO4 family.

Its subcellular location is the nucleus. Exoribonuclease involved in ribosome biosynthesis. Involved in the processing of ITS1, the internal transcribed spacer localized between the 18S and 5.8S rRNAs. This Saccharomyces cerevisiae (strain ATCC 204508 / S288c) (Baker's yeast) protein is RNA exonuclease 4 (REX4).